We begin with the raw amino-acid sequence, 252 residues long: Chitooligosaccharide deacetylase (252 aa).

2 residues coordinate Mg(2+): histidine 61 and histidine 125.

Belongs to the YdjC deacetylase family. ChbG subfamily. Homodimer. It depends on Mg(2+) as a cofactor.

It localises to the cytoplasm. It carries out the reaction N,N'-diacetylchitobiose + H2O = N-acetyl-beta-D-glucosaminyl-(1-&gt;4)-D-glucosamine + acetate. It catalyses the reaction diacetylchitobiose-6'-phosphate + H2O = N'-monoacetylchitobiose-6'-phosphate + acetate. It functions in the pathway glycan degradation; chitin degradation. Functionally, involved in the degradation of chitin. ChbG is essential for growth on the acetylated chitooligosaccharides chitobiose and chitotriose but is dispensable for growth on cellobiose and chitosan dimer, the deacetylated form of chitobiose. Deacetylation of chitobiose-6-P and chitotriose-6-P is necessary for both the activation of the chb promoter by the regulatory protein ChbR and the hydrolysis of phosphorylated beta-glucosides by the phospho-beta-glucosidase ChbF. Catalyzes the removal of only one acetyl group from chitobiose-6-P to yield monoacetylchitobiose-6-P, the inducer of ChbR and the substrate of ChbF. This is Chitooligosaccharide deacetylase from Escherichia coli (strain 55989 / EAEC).